The primary structure comprises 386 residues: uncharacterized protein (386 aa).

The segment at 355 to 386 (PSEAQKVQVKSNKKPPIAPKPEHLKKRDHGLC) is disordered. Over residues 377 to 386 (HLKKRDHGLC) the composition is skewed to basic residues.

This is an uncharacterized protein from Rickettsia prowazekii (strain Madrid E).